The chain runs to 141 residues: Hemoglobin subunit alpha-D (141 aa).

The 141-residue stretch at 1–141 (MLTAEDKKLI…VAAVLAEKYR (141 aa)) folds into the Globin domain. The heme b site is built by His-58 and His-87.

Belongs to the globin family. Heterotetramer of two alpha-D chains and two beta chains. Red blood cells.

Functionally, involved in oxygen transport from the lung to the various peripheral tissues. This chain is Hemoglobin subunit alpha-D (HBAD), found in Anas platyrhynchos (Mallard).